The chain runs to 285 residues: uncharacterized protein (285 aa).

Mn(2+) contacts are provided by H110, D131, H133, D135, D214, and D216.

It belongs to the arginase family. Requires Mn(2+) as cofactor.

This is an uncharacterized protein from Methanothermus fervidus.